A 676-amino-acid chain; its full sequence is UvrABC system protein C (676 aa).

The GIY-YIG domain maps to 16–95 (VEPGVYRFRD…IKEFDPRFNI (80 aa)). Residues 208–243 (DRLVRDLERKMTAAAEDLDFERAARLRDDIGALRRA) form the UVR domain.

Belongs to the UvrC family. In terms of assembly, interacts with UvrB in an incision complex.

Its subcellular location is the cytoplasm. Its function is as follows. The UvrABC repair system catalyzes the recognition and processing of DNA lesions. UvrC both incises the 5' and 3' sides of the lesion. The N-terminal half is responsible for the 3' incision and the C-terminal half is responsible for the 5' incision. The chain is UvrABC system protein C from Mycobacterium sp. (strain KMS).